The primary structure comprises 61 residues: Metallothionein-1M (61 aa).

Positions 1-29 (MDPNCSCTTGVSCACTGSCTCKECKCTSC) are beta. 20 residues coordinate a divalent metal cation: Cys-5, Cys-7, Cys-13, Cys-15, Cys-19, Cys-21, Cys-24, Cys-26, Cys-29, Cys-33, Cys-34, Cys-36, Cys-37, Cys-41, Cys-44, Cys-48, Cys-50, Cys-57, Cys-59, and Cys-60. An alpha region spans residues 30–61 (KKSCCSCCPVGCAKCAHGCVCKGTLENCSCCA).

It belongs to the metallothionein superfamily. Type 1 family. In terms of assembly, monomer.

Functionally, metallothioneins have a high content of cysteine residues that bind various heavy metals; these proteins are transcriptionally regulated by both heavy metals and glucocorticoids. This chain is Metallothionein-1M (MT1M), found in Homo sapiens (Human).